The following is a 461-amino-acid chain: GTPase Der (461 aa).

EngA-type G domains are found at residues 9–171 and 200–371; these read KTIA…NLNK and IQVG…ECFS. Residues 15–22, 62–66, 123–126, 206–213, 253–257, and 317–320 contribute to the GTP site; these read GQPNVGKS, DTGGM, NKID, GRVNVGKS, DTAGI, and NKWD. Residues 372–456 form the KH-like domain; sequence KRIPTSLLNS…PLILNAKDKK (85 aa).

It belongs to the TRAFAC class TrmE-Era-EngA-EngB-Septin-like GTPase superfamily. EngA (Der) GTPase family. In terms of assembly, associates with the 50S ribosomal subunit.

Functionally, GTPase that plays an essential role in the late steps of ribosome biogenesis. The sequence is that of GTPase Der from Helicobacter pylori (strain HPAG1).